The primary structure comprises 178 residues: Ribosome maturation factor RimP (178 aa).

It belongs to the RimP family.

It is found in the cytoplasm. Required for maturation of 30S ribosomal subunits. In Maricaulis maris (strain MCS10) (Caulobacter maris), this protein is Ribosome maturation factor RimP.